A 248-amino-acid chain; its full sequence is 3-deoxy-manno-octulosonate cytidylyltransferase (248 aa).

It belongs to the KdsB family.

It is found in the cytoplasm. The catalysed reaction is 3-deoxy-alpha-D-manno-oct-2-ulosonate + CTP = CMP-3-deoxy-beta-D-manno-octulosonate + diphosphate. The protein operates within nucleotide-sugar biosynthesis; CMP-3-deoxy-D-manno-octulosonate biosynthesis; CMP-3-deoxy-D-manno-octulosonate from 3-deoxy-D-manno-octulosonate and CTP: step 1/1. It participates in bacterial outer membrane biogenesis; lipopolysaccharide biosynthesis. Its function is as follows. Activates KDO (a required 8-carbon sugar) for incorporation into bacterial lipopolysaccharide in Gram-negative bacteria. This chain is 3-deoxy-manno-octulosonate cytidylyltransferase, found in Salmonella agona (strain SL483).